The following is a 50-amino-acid chain: PsaJ-like protein asl3190 (50 aa).

A helical transmembrane segment spans residues valine 21 to phenylalanine 41.

The protein belongs to the PsaJ family.

It localises to the cellular thylakoid membrane. The sequence is that of PsaJ-like protein asl3190 from Nostoc sp. (strain PCC 7120 / SAG 25.82 / UTEX 2576).